Reading from the N-terminus, the 330-residue chain is Probable cytosolic iron-sulfur protein assembly protein 1 (330 aa).

7 WD repeats span residues leucine 12–isoleucine 49, alanine 56–phenylalanine 95, glycine 105–glutamate 144, glutamate 151–valine 190, glycine 195–glutamine 236, valine 248–phenylalanine 286, and cysteine 292–alanine 330.

Belongs to the WD repeat CIA1 family. Interacts with NAR1.

Its subcellular location is the cytoplasm. The protein localises to the nucleus. Essential component of the cytosolic iron-sulfur (Fe/S) protein assembly machinery. Required for the maturation of extramitochondrial Fe/S proteins. The protein is Probable cytosolic iron-sulfur protein assembly protein 1 of Saccharomyces cerevisiae (strain YJM789) (Baker's yeast).